The following is a 182-amino-acid chain: UPF0149 protein CGSHiGG_07585 (182 aa).

Belongs to the UPF0149 family.

The protein is UPF0149 protein CGSHiGG_07585 of Haemophilus influenzae (strain PittGG).